Consider the following 518-residue polypeptide: Alpha-ionylideneethane synthase abl3 (518 aa).

2 disordered regions span residues 294–355 (AAPG…SVFE) and 440–466 (KAPP…QRSK). Low complexity predominate over residues 299 to 339 (TSSDNSSDNRSSSISSTSSTGTDGSGAGDASSVHSSGVHSD).

Belongs to the alpha-ionylideneethane synthase family.

The protein operates within hormone biosynthesis. In terms of biological role, alpha-ionylideneethane synthase involved in the biosynthesis of abscisic acid (ABA), a phytohormone that acts antagonistically toward salicylic acid (SA), jasmonic acid (JA) and ethylene (ETH) signaling, to impede plant defense responses. During pathogen-host interaction, ABA plays a dual role in disease severity by increasing plant susceptibility and accelerating pathogenesis in the fungus itself. The first step of the pathway catalyzes the reaction from farnesyl diphosphate to alpha-ionylideneethane performed by the alpha-ionylideneethane synthase ABA3 via a three-step reaction mechanism involving 2 neutral intermediates, beta-farnesene and allofarnesene. The cytochrome P450 monooxygenase ABA1 might then be involved in the conversion of alpha-ionylideneethane to alpha-ionylideneacetic acid. Alpha-ionylideneacetic acid is further converted to abscisic acid in 2 steps involving the cytochrome P450 monooxygenase ABA2 and the short-chain dehydrogenase/reductase ABA4, via the intermediates 1'-deoxy-ABA or 1',4'-trans-diol-ABA, depending on the order of action of these 2 enzymes. ABA2 is responsible for the hydroxylation of carbon atom C-1' and ABA4 might be involved in the oxidation of the C-4' carbon atom. This is Alpha-ionylideneethane synthase abl3 from Pyricularia oryzae (strain Y34) (Rice blast fungus).